The chain runs to 445 residues: Tubulin beta chain (445 aa).

Q11, E69, S138, G142, T143, G144, N204, and N226 together coordinate GTP. Residue E69 coordinates Mg(2+).

The protein belongs to the tubulin family. In terms of assembly, dimer of alpha and beta chains. A typical microtubule is a hollow water-filled tube with an outer diameter of 25 nm and an inner diameter of 15 nM. Alpha-beta heterodimers associate head-to-tail to form protofilaments running lengthwise along the microtubule wall with the beta-tubulin subunit facing the microtubule plus end conferring a structural polarity. Microtubules usually have 13 protofilaments but different protofilament numbers can be found in some organisms and specialized cells. It depends on Mg(2+) as a cofactor.

Its subcellular location is the cytoplasm. It is found in the cytoskeleton. Tubulin is the major constituent of microtubules, a cylinder consisting of laterally associated linear protofilaments composed of alpha- and beta-tubulin heterodimers. Microtubules grow by the addition of GTP-tubulin dimers to the microtubule end, where a stabilizing cap forms. Below the cap, tubulin dimers are in GDP-bound state, owing to GTPase activity of alpha-tubulin. The chain is Tubulin beta chain (TUB-2) from Schizophyllum commune (Split gill fungus).